The following is an 863-amino-acid chain: Bifunctional uridylyltransferase/uridylyl-removing enzyme (863 aa).

A uridylyltransferase region spans residues 1-328 (MLFPLSLSSP…SSNQATVIEQ (328 aa)). The tract at residues 329-687 (LDDDFQLINQ…ISNRFSLGGT (359 aa)) is uridylyl-removing. The HD domain maps to 446–568 (VDEHTLRVML…VQNQVRLDYL (123 aa)). ACT domains are found at residues 688-772 (EVFI…PNRQ) and 794-863 (EMEL…RNIG).

The protein belongs to the GlnD family. The cofactor is Mg(2+).

It catalyses the reaction [protein-PII]-L-tyrosine + UTP = [protein-PII]-uridylyl-L-tyrosine + diphosphate. The enzyme catalyses [protein-PII]-uridylyl-L-tyrosine + H2O = [protein-PII]-L-tyrosine + UMP + H(+). Its activity is regulated as follows. Uridylyltransferase (UTase) activity is inhibited by glutamine, while glutamine activates uridylyl-removing (UR) activity. In terms of biological role, modifies, by uridylylation and deuridylylation, the PII regulatory proteins (GlnB and homologs), in response to the nitrogen status of the cell that GlnD senses through the glutamine level. Under low glutamine levels, catalyzes the conversion of the PII proteins and UTP to PII-UMP and PPi, while under higher glutamine levels, GlnD hydrolyzes PII-UMP to PII and UMP (deuridylylation). Thus, controls uridylylation state and activity of the PII proteins, and plays an important role in the regulation of nitrogen assimilation and metabolism. The polypeptide is Bifunctional uridylyltransferase/uridylyl-removing enzyme (Haemophilus influenzae (strain PittEE)).